A 725-amino-acid polypeptide reads, in one-letter code: ATP-dependent zinc metalloprotease FtsH (725 aa).

The Cytoplasmic segment spans residues 1–11; that stretch reads MDKMKKPKINW. Residues 12-32 traverse the membrane as a helical segment; it reads LLIVIVGIIAALLITVLVLLF. Residues 33–160 lie on the Extracellular side of the membrane; it reads SPKTQPKSFD…LFGQHIVQEN (128 aa). A helical membrane pass occupies residues 161-181; that stretch reads GFITFIKAIWFPALIAIIIFL. The Cytoplasmic segment spans residues 182-725; that stretch reads GYKAQSRAAS…EEETLAEKAE (544 aa). ATP is bound at residue 252–259; that stretch reads GPPGTGKT. Residue His474 participates in Zn(2+) binding. Residue Glu475 is part of the active site. His478 and Asp552 together coordinate Zn(2+). A disordered region spans residues 680–725; the sequence is QVNESQEKDKQKNAQIKEDLSKMDKKDNLTKAKDKGEEETLAEKAE. The span at 684-725 shows a compositional bias: basic and acidic residues; the sequence is SQEKDKQKNAQIKEDLSKMDKKDNLTKAKDKGEEETLAEKAE.

In the central section; belongs to the AAA ATPase family. This sequence in the C-terminal section; belongs to the peptidase M41 family. Homohexamer. The cofactor is Zn(2+).

It localises to the cell membrane. Functionally, acts as a processive, ATP-dependent zinc metallopeptidase for both cytoplasmic and membrane proteins. Plays a role in the quality control of integral membrane proteins. This chain is ATP-dependent zinc metalloprotease FtsH, found in Mycoplasmopsis pulmonis (strain UAB CTIP) (Mycoplasma pulmonis).